The chain runs to 453 residues: 3-phosphoshikimate 1-carboxyvinyltransferase (453 aa).

Residues 1-12 (MDVNVTSSTVRG) are compositionally biased toward polar residues. The tract at residues 1-21 (MDVNVTSSTVRGTTRAPPSKS) is disordered. 3-phosphoshikimate contacts are provided by Lys-20, Ser-21, and Arg-25. Lys-20 is a phosphoenolpyruvate binding site. Residues Gly-97 and Arg-125 each contribute to the phosphoenolpyruvate site. Residues Ser-170, Ser-171, Gln-172, Ser-198, Asp-330, and Lys-357 each contribute to the 3-phosphoshikimate site. Phosphoenolpyruvate is bound at residue Gln-172. The active-site Proton acceptor is the Asp-330. Phosphoenolpyruvate-binding residues include Arg-361 and Arg-404.

It belongs to the EPSP synthase family. As to quaternary structure, monomer.

The protein localises to the cytoplasm. It carries out the reaction 3-phosphoshikimate + phosphoenolpyruvate = 5-O-(1-carboxyvinyl)-3-phosphoshikimate + phosphate. Its pathway is metabolic intermediate biosynthesis; chorismate biosynthesis. In terms of biological role, catalyzes the transfer of the enolpyruvyl moiety of phosphoenolpyruvate (PEP) to the 5-hydroxyl of shikimate-3-phosphate (S3P) to produce enolpyruvyl shikimate-3-phosphate and inorganic phosphate. In Halorubrum lacusprofundi (strain ATCC 49239 / DSM 5036 / JCM 8891 / ACAM 34), this protein is 3-phosphoshikimate 1-carboxyvinyltransferase.